The sequence spans 615 residues: Chaperone protein HscA (615 aa).

This sequence belongs to the heat shock protein 70 family.

Chaperone involved in the maturation of iron-sulfur cluster-containing proteins. Has a low intrinsic ATPase activity which is markedly stimulated by HscB. Involved in the maturation of IscU. In Xenorhabdus nematophila (strain ATCC 19061 / DSM 3370 / CCUG 14189 / LMG 1036 / NCIMB 9965 / AN6), this protein is Chaperone protein HscA.